Reading from the N-terminus, the 129-residue chain is Large ribosomal subunit protein bL19 (129 aa).

Belongs to the bacterial ribosomal protein bL19 family.

Functionally, this protein is located at the 30S-50S ribosomal subunit interface and may play a role in the structure and function of the aminoacyl-tRNA binding site. This chain is Large ribosomal subunit protein bL19, found in Methylobacillus flagellatus (strain ATCC 51484 / DSM 6875 / VKM B-1610 / KT).